Reading from the N-terminus, the 498-residue chain is Glycerol kinase (498 aa).

Thr-12 serves as a coordination point for ADP. Positions 12, 13, and 14 each coordinate ATP. Thr-12 lines the sn-glycerol 3-phosphate pocket. Arg-16 contacts ADP. Sn-glycerol 3-phosphate-binding residues include Arg-82, Glu-83, Tyr-134, and Asp-243. 5 residues coordinate glycerol: Arg-82, Glu-83, Tyr-134, Asp-243, and Gln-244. ADP-binding residues include Thr-265 and Gly-308. Thr-265, Gly-308, Gln-312, and Gly-409 together coordinate ATP. ADP-binding residues include Gly-409 and Asn-413.

It belongs to the FGGY kinase family. Homotetramer and homodimer (in equilibrium).

The enzyme catalyses glycerol + ATP = sn-glycerol 3-phosphate + ADP + H(+). It functions in the pathway polyol metabolism; glycerol degradation via glycerol kinase pathway; sn-glycerol 3-phosphate from glycerol: step 1/1. With respect to regulation, activated by phosphorylation and inhibited by fructose 1,6-bisphosphate (FBP). Key enzyme in the regulation of glycerol uptake and metabolism. Catalyzes the phosphorylation of glycerol to yield sn-glycerol 3-phosphate. The sequence is that of Glycerol kinase from Clostridium botulinum (strain ATCC 19397 / Type A).